We begin with the raw amino-acid sequence, 458 residues long: ATP synthase subunit beta (458 aa).

ATP is bound at residue 148 to 155; it reads GGAGVGKT.

Belongs to the ATPase alpha/beta chains family. F-type ATPases have 2 components, CF(1) - the catalytic core - and CF(0) - the membrane proton channel. CF(1) has five subunits: alpha(3), beta(3), gamma(1), delta(1), epsilon(1). CF(0) has three main subunits: a(1), b(2) and c(9-12). The alpha and beta chains form an alternating ring which encloses part of the gamma chain. CF(1) is attached to CF(0) by a central stalk formed by the gamma and epsilon chains, while a peripheral stalk is formed by the delta and b chains.

The protein localises to the cell inner membrane. The enzyme catalyses ATP + H2O + 4 H(+)(in) = ADP + phosphate + 5 H(+)(out). Its function is as follows. Produces ATP from ADP in the presence of a proton gradient across the membrane. The catalytic sites are hosted primarily by the beta subunits. In Francisella tularensis subsp. mediasiatica (strain FSC147), this protein is ATP synthase subunit beta.